Consider the following 992-residue polypeptide: MSSTTTVAEFAAELNKSPATLIEQLTSAGVAKVQASDPLSESDKQKLLGYLHASHGTVAADRKKITLVKKSTSEIKQADSTGRARIIPVQTIKKRTFIKRDDGSDMPVEEAQPEVLVAPQVQAAADAELVRREDEANRHAELLRRQEAELTEKRRLRDEQAAQEAAREREREAAAQKAQAEAVAQAAAAAQAAALAAEAAKKVKPTIGKIFKPAPVAPTAPAITVEAQKVIDTAAAEKTSKAAEAATAKAAETASLQAAAKAKATAEFQADAAKAVDLQERRRKAEAEAAGIRAMLSAPKRVLVPHVDPKIAMKGTLHKPVVAPGAAKPAVPAAAAPAAPGAAGKKEVKSENLSSTWKDDAAKKKGIPSRGAPVVPGRGNFRAGPRGRRSSGRDVRPESNFVAPTEFKVLEVHVPETITVSELAHKMSIKSSEVIKHLMKLGQMVTINQPLDQDTAMIVVEEMGHTALTAALDDPEAFTADDVQGQQAEALPRAPVVTVMGHVDHGKTSLLDYIRRAKVASGEAGGITQHIGAYHVQTPRGMVSFLDTPGHEAFTAMRARGAQATDIVILVVAADDGVMPQTKEAIKHARAAGVPIVVAINKIDKPGINLERVKGELVTEGVVPEEFGGDSPFVPVSAHTGAGIDDLLEQVLLQAEVLELKASVDSLAKGLVIEARLDKGRGPVATVLVQSGTLKAGDVVLAGSTYGRVRAMLDENGKPIKTAGPSIPVEIQGLTEVPQAGDDFMVMTDERRVREIATYRAGKFRNTKLAKQQASKLENMFSDINAGEVKMLPIIIKADVQGSQEALAQSLLKLSTDEVKVQLVYSGVGGISESDVNLAIASKAVLIGFNTRADAQARKQAENNGIDIRYYNIIYDAVDELKAAMSGMLTPDKKEEIIGNAEIRNIFKVSKIGSIAGCMVTAGVVRRTAKVRLLRGNVVIFTGELDSLKRFKDDAKEVKEGFECGLNLKNYNDIEVGDILEFFEIKEVARTL.

Disordered regions lie at residues 154–173 (RRLR…EREA) and 338–399 (AAPG…RPES). The tr-type G domain maps to 492 to 661 (PRAPVVTVMG…LLQAEVLELK (170 aa)). Positions 501-508 (GHVDHGKT) are G1. A GTP-binding site is contributed by 501–508 (GHVDHGKT). The segment at 526–530 (GITQH) is G2. The interval 547 to 550 (DTPG) is G3. GTP-binding positions include 547–551 (DTPGH) and 601–604 (NKID). The segment at 601-604 (NKID) is G4. Residues 637–639 (SAH) are G5.

It belongs to the TRAFAC class translation factor GTPase superfamily. Classic translation factor GTPase family. IF-2 subfamily.

Its subcellular location is the cytoplasm. Its function is as follows. One of the essential components for the initiation of protein synthesis. Protects formylmethionyl-tRNA from spontaneous hydrolysis and promotes its binding to the 30S ribosomal subunits. Also involved in the hydrolysis of GTP during the formation of the 70S ribosomal complex. The chain is Translation initiation factor IF-2 from Polaromonas naphthalenivorans (strain CJ2).